Reading from the N-terminus, the 269-residue chain is Membrane protein insertase YidC 1 (269 aa).

A signal peptide spans 1–20; sequence MKKKFSLIAMAGAALLLLTA. A lipid anchor (N-palmitoyl cysteine) is attached at cysteine 21. Cysteine 21 is lipidated: S-diacylglycerol cysteine. 4 consecutive transmembrane segments (helical) span residues 45–65, 124–144, 165–185, and 203–223; these read IRFL…TIVI, YMGC…YQAL, PTFI…YLMM, and PIFI…YWVI.

This sequence belongs to the OXA1/ALB3/YidC family. Type 2 subfamily.

It localises to the cell membrane. In terms of biological role, required for the insertion and/or proper folding and/or complex formation of integral membrane proteins into the membrane. Involved in integration of membrane proteins that insert both dependently and independently of the Sec translocase complex, as well as at least some lipoproteins. This is Membrane protein insertase YidC 1 from Lactococcus lactis subsp. lactis (strain IL1403) (Streptococcus lactis).